A 358-amino-acid chain; its full sequence is 3-dehydroquinate synthase (358 aa).

NAD(+) contacts are provided by residues 70 to 75, 104 to 108, 128 to 129, Lys-141, and Lys-150; these read DGEAHK, GVIGD, and TT. Positions 183, 246, and 263 each coordinate Zn(2+).

It belongs to the sugar phosphate cyclases superfamily. Dehydroquinate synthase family. Requires NAD(+) as cofactor. The cofactor is Co(2+). Zn(2+) is required as a cofactor.

It localises to the cytoplasm. The catalysed reaction is 7-phospho-2-dehydro-3-deoxy-D-arabino-heptonate = 3-dehydroquinate + phosphate. It participates in metabolic intermediate biosynthesis; chorismate biosynthesis; chorismate from D-erythrose 4-phosphate and phosphoenolpyruvate: step 2/7. Its function is as follows. Catalyzes the conversion of 3-deoxy-D-arabino-heptulosonate 7-phosphate (DAHP) to dehydroquinate (DHQ). This is 3-dehydroquinate synthase from Bordetella bronchiseptica (strain ATCC BAA-588 / NCTC 13252 / RB50) (Alcaligenes bronchisepticus).